A 572-amino-acid polypeptide reads, in one-letter code: Phenylalanine--tRNA ligase beta subunit (572 aa).

Positions 285–363 (LSTTTKTVSH…RAFGFNELEP (79 aa)) constitute a B5 domain. Aspartate 341, aspartate 347, aspartate 350, and aspartate 351 together coordinate Mg(2+).

Belongs to the phenylalanyl-tRNA synthetase beta subunit family. Type 2 subfamily. Tetramer of two alpha and two beta subunits. It depends on Mg(2+) as a cofactor.

It localises to the cytoplasm. The catalysed reaction is tRNA(Phe) + L-phenylalanine + ATP = L-phenylalanyl-tRNA(Phe) + AMP + diphosphate + H(+). The sequence is that of Phenylalanine--tRNA ligase beta subunit from Natronomonas pharaonis (strain ATCC 35678 / DSM 2160 / CIP 103997 / JCM 8858 / NBRC 14720 / NCIMB 2260 / Gabara) (Halobacterium pharaonis).